An 88-amino-acid chain; its full sequence is UPF0297 protein GK2555 (88 aa).

This sequence belongs to the UPF0297 family.

The sequence is that of UPF0297 protein GK2555 from Geobacillus kaustophilus (strain HTA426).